The primary structure comprises 292 residues: N-acetylneuraminate lyase (292 aa).

Aceneuramate-binding residues include S46 and T47. Y135 serves as the catalytic Proton donor. K163 functions as the Schiff-base intermediate with substrate in the catalytic mechanism. T165, G187, D189, E190, and S206 together coordinate aceneuramate.

This sequence belongs to the DapA family. NanA subfamily. Homotetramer.

It localises to the cytoplasm. The enzyme catalyses aceneuramate = aldehydo-N-acetyl-D-mannosamine + pyruvate. The protein operates within amino-sugar metabolism; N-acetylneuraminate degradation; D-fructose 6-phosphate from N-acetylneuraminate: step 1/5. Catalyzes the reversible aldol cleavage of N-acetylneuraminic acid (sialic acid; Neu5Ac) to form pyruvate and N-acetylmannosamine (ManNAc) via a Schiff base intermediate. The polypeptide is N-acetylneuraminate lyase (Lactiplantibacillus plantarum (strain ATCC BAA-793 / NCIMB 8826 / WCFS1) (Lactobacillus plantarum)).